The following is a 178-amino-acid chain: Large ribosomal subunit protein uL6 (178 aa).

This sequence belongs to the universal ribosomal protein uL6 family. As to quaternary structure, part of the 50S ribosomal subunit.

Functionally, this protein binds to the 23S rRNA, and is important in its secondary structure. It is located near the subunit interface in the base of the L7/L12 stalk, and near the tRNA binding site of the peptidyltransferase center. The sequence is that of Large ribosomal subunit protein uL6 from Streptococcus pneumoniae (strain ATCC 700669 / Spain 23F-1).